Consider the following 320-residue polypeptide: MTTNYSEPDPLVCDETYSSSIEILKYLLTISYLIPGGILHLFILHTILVTRRGYFKGSSFFAIFALDSVSSIIIVFIDSFYGRLFLYVPPLCPIVGPFFWASSLIPKIYFYLSVHTRLSKCVAHICMVLNRMTCVLMPTYYGQIWRKLTKVSLVIICILPLGGTWNIIISPRFYVLPSYGGFAISYVRAIPWASSSLFQSIYILTALVFTFICTSVTLYKLISLSDRIKSAEKSLCFSNIYISLTFLAAAASQALYAFCTSCMSSDLLFTAQFLAFDMFTVGSAVILFWSNSQIRGLILPSKAEDDRIFRVQTINNSFTH.

7 consecutive transmembrane segments (helical) span residues 29 to 49, 57 to 77, 85 to 105, 151 to 171, 197 to 217, 240 to 260, and 268 to 288; these read TISY…TILV, GSSF…IVFI, FLYV…SSLI, VSLV…IISP, LFQS…TSVT, IYIS…AFCT, and LFTA…VILF.

Belongs to the nematode receptor-like protein srg family.

It is found in the membrane. The chain is Serpentine receptor class gamma-15 (srg-15) from Caenorhabditis elegans.